The sequence spans 553 residues: Methionine--tRNA ligase (553 aa).

The short motif at 12 to 22 (PYANSQLHLGH) is the 'HIGH' region element. 4 residues coordinate Zn(2+): C144, C147, C157, and C160. The short motif at 332–336 (KFSKS) is the 'KMSKS' region element. Position 335 (K335) interacts with ATP.

The protein belongs to the class-I aminoacyl-tRNA synthetase family. MetG type 1 subfamily. Monomer. Zn(2+) serves as cofactor.

The protein localises to the cytoplasm. It catalyses the reaction tRNA(Met) + L-methionine + ATP = L-methionyl-tRNA(Met) + AMP + diphosphate. In terms of biological role, is required not only for elongation of protein synthesis but also for the initiation of all mRNA translation through initiator tRNA(fMet) aminoacylation. The chain is Methionine--tRNA ligase from Dehalococcoides mccartyi (strain ATCC BAA-2100 / JCM 16839 / KCTC 5957 / BAV1).